Here is a 295-residue protein sequence, read N- to C-terminus: GTPase Era (295 aa).

The 168-residue stretch at 5–172 folds into the Era-type G domain; sequence YCGYAAIIGR…EQAVHQLMPE (168 aa). Residues 13–20 are G1; sequence GRPNVGKS. 13-20 lines the GTP pocket; the sequence is GRPNVGKS. Residues 39–43 form a G2 region; it reads QTTRY. The segment at 60-63 is G3; that stretch reads DTPG. GTP is bound by residues 60–64 and 121–124; these read DTPGL and NKVD. Residues 121–124 form a G4 region; that stretch reads NKVD. The tract at residues 151 to 153 is G5; the sequence is LSA. A KH type-2 domain is found at 203–279; sequence LGQEIPYSLA…FLQLWVKVKS (77 aa).

The protein belongs to the TRAFAC class TrmE-Era-EngA-EngB-Septin-like GTPase superfamily. Era GTPase family. As to quaternary structure, monomer.

The protein localises to the cytoplasm. It localises to the cell inner membrane. Functionally, an essential GTPase that binds both GDP and GTP, with rapid nucleotide exchange. Plays a role in 16S rRNA processing and 30S ribosomal subunit biogenesis and possibly also in cell cycle regulation and energy metabolism. The chain is GTPase Era from Coxiella burnetii (strain CbuG_Q212) (Coxiella burnetii (strain Q212)).